A 364-amino-acid polypeptide reads, in one-letter code: Selection and upkeep of intraepithelial T-cells protein 11 (364 aa).

The N-terminal stretch at 1–28 is a signal peptide; that stretch reads MEPSASCLPGFFMVCILLKITVLTQVMS. Residues 29–118 form the Ig-like V-type domain; sequence LDIQINTQIP…TNQEKRRSII (90 aa). The Extracellular segment spans residues 29-138; that stretch reads LDIQINTQIP…MSLMSNNLLY (110 aa). C48 and C102 are joined by a disulfide. Residues 139 to 159 traverse the membrane as a helical segment; the sequence is LGIYLIFILFLNFLKGILFCL. Residues 160–186 are Cytoplasmic-facing; sequence TKRLVHFRKRMIKIKKVWSNKTRACCP. The helical transmembrane segment at 187–207 threads the bilayer; sequence LIWEFLEIVLFIAFLPLYLMF. Residues 208 to 230 lie on the Extracellular side of the membrane; it reads RIRVFTLDEAHILYNNWLWKVCK. A helical membrane pass occupies residues 231–251; it reads TLIAMMILFTVLILFLLWTLN. At 252-364 the chain is on the cytoplasmic side; the sequence is RYGKMPCLSS…LYSKLGNLTH (113 aa).

This sequence belongs to the SKINT family. As to expression, expressed in skin and thymus.

It localises to the membrane. May act by engaging a cell surface molecule on immature T-cells in the embryonic thymus. In Mus musculus (Mouse), this protein is Selection and upkeep of intraepithelial T-cells protein 11 (Skint11).